A 204-amino-acid chain; its full sequence is Tetraspanin-13 (204 aa).

Topologically, residues Met1–Leu19 are cytoplasmic. Residues Tyr20–Ile40 traverse the membrane as a helical segment. Residues Ser41 to Arg44 lie on the Extracellular side of the membrane. Residues Val45–Ile65 form a helical membrane-spanning segment. The Cytoplasmic segment spans residues Gly66–Gln72. Residues Val73–Ser93 traverse the membrane as a helical segment. Residues Cys94–Arg167 are Extracellular-facing. Residues Asn113 and Asn137 are each glycosylated (N-linked (GlcNAc...) asparagine). Ser143 carries the phosphoserine modification. A helical membrane pass occupies residues Phe168 to Tyr188. Residues Arg189–Leu204 are Cytoplasmic-facing.

It belongs to the tetraspanin (TM4SF) family.

The protein localises to the membrane. This Mus musculus (Mouse) protein is Tetraspanin-13 (Tspan13).